Reading from the N-terminus, the 345-residue chain is Holliday junction branch migration complex subunit RuvB (345 aa).

The tract at residues 4 to 185 (TDRLIAPSTQ…FGIVSRLEFY (182 aa)) is large ATPase domain (RuvB-L). ATP contacts are provided by residues Leu-24, Arg-25, Gly-66, Lys-69, Thr-70, Thr-71, 132 to 134 (EDY), Arg-175, Tyr-185, and Arg-222. Position 70 (Thr-70) interacts with Mg(2+). The tract at residues 186–256 (TADELARIVH…IADAALKMLD (71 aa)) is small ATPAse domain (RuvB-S). Residues 259 to 345 (KLGFDVMDRK…KIGTGELWQQ (87 aa)) are head domain (RuvB-H). Residues Arg-295, Arg-314, and Arg-319 each contribute to the DNA site.

It belongs to the RuvB family. Homohexamer. Forms an RuvA(8)-RuvB(12)-Holliday junction (HJ) complex. HJ DNA is sandwiched between 2 RuvA tetramers; dsDNA enters through RuvA and exits via RuvB. An RuvB hexamer assembles on each DNA strand where it exits the tetramer. Each RuvB hexamer is contacted by two RuvA subunits (via domain III) on 2 adjacent RuvB subunits; this complex drives branch migration. In the full resolvosome a probable DNA-RuvA(4)-RuvB(12)-RuvC(2) complex forms which resolves the HJ.

Its subcellular location is the cytoplasm. The catalysed reaction is ATP + H2O = ADP + phosphate + H(+). Functionally, the RuvA-RuvB-RuvC complex processes Holliday junction (HJ) DNA during genetic recombination and DNA repair, while the RuvA-RuvB complex plays an important role in the rescue of blocked DNA replication forks via replication fork reversal (RFR). RuvA specifically binds to HJ cruciform DNA, conferring on it an open structure. The RuvB hexamer acts as an ATP-dependent pump, pulling dsDNA into and through the RuvAB complex. RuvB forms 2 homohexamers on either side of HJ DNA bound by 1 or 2 RuvA tetramers; 4 subunits per hexamer contact DNA at a time. Coordinated motions by a converter formed by DNA-disengaged RuvB subunits stimulates ATP hydrolysis and nucleotide exchange. Immobilization of the converter enables RuvB to convert the ATP-contained energy into a lever motion, pulling 2 nucleotides of DNA out of the RuvA tetramer per ATP hydrolyzed, thus driving DNA branch migration. The RuvB motors rotate together with the DNA substrate, which together with the progressing nucleotide cycle form the mechanistic basis for DNA recombination by continuous HJ branch migration. Branch migration allows RuvC to scan DNA until it finds its consensus sequence, where it cleaves and resolves cruciform DNA. In Methylobacillus flagellatus (strain ATCC 51484 / DSM 6875 / VKM B-1610 / KT), this protein is Holliday junction branch migration complex subunit RuvB.